The following is a 227-amino-acid chain: ATP-dependent dethiobiotin synthetase BioD (227 aa).

13–18 lines the ATP pocket; that stretch reads DIGKTY. T17 provides a ligand contact to Mg(2+). Residue K38 is part of the active site. Position 42 (S42) interacts with substrate. Residues D55, 116 to 119, and 179 to 180 each bind ATP; these read EGSG and NN. 2 residues coordinate Mg(2+): D55 and E116.

It belongs to the dethiobiotin synthetase family. In terms of assembly, homodimer. The cofactor is Mg(2+).

It is found in the cytoplasm. It carries out the reaction (7R,8S)-7,8-diammoniononanoate + CO2 + ATP = (4R,5S)-dethiobiotin + ADP + phosphate + 3 H(+). Its pathway is cofactor biosynthesis; biotin biosynthesis; biotin from 7,8-diaminononanoate: step 1/2. Catalyzes a mechanistically unusual reaction, the ATP-dependent insertion of CO2 between the N7 and N8 nitrogen atoms of 7,8-diaminopelargonic acid (DAPA, also called 7,8-diammoniononanoate) to form a ureido ring. The sequence is that of ATP-dependent dethiobiotin synthetase BioD from Clostridium botulinum (strain Loch Maree / Type A3).